A 584-amino-acid polypeptide reads, in one-letter code: UvrABC system protein C (584 aa).

The 78-residue stretch at 12 to 89 (NKPGCYLFLN…IKKYRPKYNV (78 aa)) folds into the GIY-YIG domain. The UVR domain maps to 194 to 229 (NQVKQTLVKQMQKASDNLQFEQAKRIKDQITSLDFI).

It belongs to the UvrC family. As to quaternary structure, interacts with UvrB in an incision complex.

Its subcellular location is the cytoplasm. In terms of biological role, the UvrABC repair system catalyzes the recognition and processing of DNA lesions. UvrC both incises the 5' and 3' sides of the lesion. The N-terminal half is responsible for the 3' incision and the C-terminal half is responsible for the 5' incision. This Mycoplasma capricolum subsp. capricolum (strain California kid / ATCC 27343 / NCTC 10154) protein is UvrABC system protein C.